Reading from the N-terminus, the 490-residue chain is Cardiolipin synthase 1 (490 aa).

Transmembrane regions (helical) follow at residues 9 to 29 (ILTI…FVII) and 42 to 62 (WAWL…YLFL). PLD phosphodiesterase domains follow at residues 225 to 252 (MNNR…GDDY) and 403 to 430 (QNGF…DFRS). Residues His230, Lys232, Asp237, His408, Lys410, and Asp415 contribute to the active site.

This sequence belongs to the phospholipase D family. Cardiolipin synthase subfamily.

It localises to the cell membrane. The enzyme catalyses 2 a 1,2-diacyl-sn-glycero-3-phospho-(1'-sn-glycerol) = a cardiolipin + glycerol. Functionally, catalyzes the reversible phosphatidyl group transfer from one phosphatidylglycerol molecule to another to form cardiolipin (CL) (diphosphatidylglycerol) and glycerol. This Staphylococcus epidermidis (strain ATCC 12228 / FDA PCI 1200) protein is Cardiolipin synthase 1 (cls1).